Here is a 75-residue protein sequence, read N- to C-terminus: MKIVLIGLIRGYRTFISPLFPPSCRFQPTCSQYGIEAIERFGAIKGAWLTLGRILRCHPFHPGGYDPVPPVKPKK.

The protein belongs to the UPF0161 family.

The protein localises to the cell inner membrane. Functionally, could be involved in insertion of integral membrane proteins into the membrane. The sequence is that of Putative membrane protein insertion efficiency factor from Gloeothece citriformis (strain PCC 7424) (Cyanothece sp. (strain PCC 7424)).